A 328-amino-acid chain; its full sequence is Ferredoxin--NADP reductase 1 (328 aa).

Residues E37, K45, Y49, V89, and T310 each coordinate FAD.

This sequence belongs to the ferredoxin--NADP reductase type 2 family. Homodimer. It depends on FAD as a cofactor.

The catalysed reaction is 2 reduced [2Fe-2S]-[ferredoxin] + NADP(+) + H(+) = 2 oxidized [2Fe-2S]-[ferredoxin] + NADPH. This is Ferredoxin--NADP reductase 1 from Latilactobacillus sakei subsp. sakei (strain 23K) (Lactobacillus sakei subsp. sakei).